We begin with the raw amino-acid sequence, 382 residues long: D-galactonate dehydratase (382 aa).

D183 provides a ligand contact to Mg(2+). Residue H185 is the Proton donor of the active site. E209 and E235 together coordinate Mg(2+). H285 functions as the Proton acceptor in the catalytic mechanism.

The protein belongs to the mandelate racemase/muconate lactonizing enzyme family. GalD subfamily. Mg(2+) serves as cofactor.

It catalyses the reaction D-galactonate = 2-dehydro-3-deoxy-D-galactonate + H2O. It functions in the pathway carbohydrate acid metabolism; D-galactonate degradation; D-glyceraldehyde 3-phosphate and pyruvate from D-galactonate: step 1/3. Catalyzes the dehydration of D-galactonate to 2-keto-3-deoxy-D-galactonate. This chain is D-galactonate dehydratase, found in Salmonella dublin (strain CT_02021853).